The sequence spans 208 residues: Uracil phosphoribosyltransferase (208 aa).

5-phospho-alpha-D-ribose 1-diphosphate-binding positions include arginine 78, arginine 103, and 130–138 (DPMLATGGS). Uracil is bound by residues isoleucine 193 and 198–200 (GDA). Aspartate 199 is a binding site for 5-phospho-alpha-D-ribose 1-diphosphate.

This sequence belongs to the UPRTase family. The cofactor is Mg(2+).

The enzyme catalyses UMP + diphosphate = 5-phospho-alpha-D-ribose 1-diphosphate + uracil. It functions in the pathway pyrimidine metabolism; UMP biosynthesis via salvage pathway; UMP from uracil: step 1/1. With respect to regulation, allosterically activated by GTP. In terms of biological role, catalyzes the conversion of uracil and 5-phospho-alpha-D-ribose 1-diphosphate (PRPP) to UMP and diphosphate. The chain is Uracil phosphoribosyltransferase from Photobacterium profundum (strain SS9).